A 501-amino-acid chain; its full sequence is NAD(P)H-quinone oxidoreductase chain 4, chloroplastic (501 aa).

15 helical membrane passes run 4–24 (FPWL…IPLL), 37–57 (LGIC…YFHF), 87–107 (IGLI…AWPI), 113–130 (LSYF…GLFA), 134–154 (ILLF…LLSM), 167–187 (FILY…TMGL), 207–227 (IGLE…KLPM), 242–262 (HYST…YGLI), 274–294 (SIFA…SALT), 310–330 (VSHM…GVNG), 331–351 (AILQ…SAGV), 364–384 (MGGI…FSMA), 385–405 (SLAL…LGIV), 416–436 (VVII…LLSM), and 462–482 (IFIF…PKLV).

It belongs to the complex I subunit 4 family.

The protein resides in the plastid. Its subcellular location is the chloroplast thylakoid membrane. The catalysed reaction is a plastoquinone + NADH + (n+1) H(+)(in) = a plastoquinol + NAD(+) + n H(+)(out). It catalyses the reaction a plastoquinone + NADPH + (n+1) H(+)(in) = a plastoquinol + NADP(+) + n H(+)(out). This is NAD(P)H-quinone oxidoreductase chain 4, chloroplastic (ndhD) from Anthoceros angustus (Hornwort).